Reading from the N-terminus, the 69-residue chain is Neurotoxin Cex3 (69 aa).

Alanine 1 is a signal peptide. The 66-residue stretch at 2-67 (KDGYLVNKST…TYPLPNKSCG (66 aa)) folds into the LCN-type CS-alpha/beta domain. Cystine bridges form between cysteine 13-cysteine 66, cysteine 17-cysteine 42, cysteine 26-cysteine 47, and cysteine 30-cysteine 49. The residue at position 66 (cysteine 66) is a Cysteine amide. Residues 67-69 (GRK) constitute a propeptide that is removed on maturation.

The protein belongs to the long (4 C-C) scorpion toxin superfamily. Sodium channel inhibitor family. Beta subfamily. As to expression, expressed by the venom gland.

It is found in the secreted. Its function is as follows. Beta toxins bind voltage-independently at site-4 of sodium channels (Nav) and shift the voltage of activation toward more negative potentials thereby affecting sodium channel activation and promoting spontaneous and repetitive firing. The protein is Neurotoxin Cex3 of Centruroides exilicauda (Bark scorpion).